The sequence spans 213 residues: ATP phosphoribosyltransferase (213 aa).

It belongs to the ATP phosphoribosyltransferase family. Short subfamily. In terms of assembly, heteromultimer composed of HisG and HisZ subunits.

Its subcellular location is the cytoplasm. The enzyme catalyses 1-(5-phospho-beta-D-ribosyl)-ATP + diphosphate = 5-phospho-alpha-D-ribose 1-diphosphate + ATP. It participates in amino-acid biosynthesis; L-histidine biosynthesis; L-histidine from 5-phospho-alpha-D-ribose 1-diphosphate: step 1/9. In terms of biological role, catalyzes the condensation of ATP and 5-phosphoribose 1-diphosphate to form N'-(5'-phosphoribosyl)-ATP (PR-ATP). Has a crucial role in the pathway because the rate of histidine biosynthesis seems to be controlled primarily by regulation of HisG enzymatic activity. The chain is ATP phosphoribosyltransferase from Thermoanaerobacter pseudethanolicus (strain ATCC 33223 / 39E) (Clostridium thermohydrosulfuricum).